The chain runs to 603 residues: Phosphogluconate dehydratase (603 aa).

2 residues coordinate [4Fe-4S] cluster: Cys154 and Cys221.

Belongs to the IlvD/Edd family. [4Fe-4S] cluster is required as a cofactor.

It carries out the reaction 6-phospho-D-gluconate = 2-dehydro-3-deoxy-6-phospho-D-gluconate + H2O. It functions in the pathway carbohydrate metabolism; Entner-Doudoroff pathway. Catalyzes the dehydration of 6-phospho-D-gluconate to 2-dehydro-3-deoxy-6-phospho-D-gluconate. In Escherichia coli O157:H7, this protein is Phosphogluconate dehydratase.